The following is a 230-amino-acid chain: UPF0173 metal-dependent hydrolase LI0883 (230 aa).

The protein belongs to the UPF0173 family.

The polypeptide is UPF0173 metal-dependent hydrolase LI0883 (Lawsonia intracellularis (strain PHE/MN1-00)).